Consider the following 633-residue polypeptide: Probable methyltransferase PMT15 (633 aa).

Topologically, residues 1 to 24 are cytoplasmic; it reads MGNYRWPSKLSKLSLRAKQTNLYR. A helical; Signal-anchor for type II membrane protein membrane pass occupies residues 25-45; that stretch reads VILIAILCVTFYFVGVWQHSG. Residues 46 to 633 lie on the Lumenal side of the membrane; that stretch reads RGISRSSISN…APAPDQSSDP (588 aa). Residues Asn-113 and Asn-298 are each glycosylated (N-linked (GlcNAc...) asparagine).

Belongs to the methyltransferase superfamily.

Its subcellular location is the golgi apparatus membrane. This Arabidopsis thaliana (Mouse-ear cress) protein is Probable methyltransferase PMT15.